The following is a 446-amino-acid chain: Peroxisomal biogenesis factor 3 (446 aa).

Topologically, residues 1 to 12 (MARTGLQRHRGK) are peroxisomal. A helical transmembrane segment spans residues 13-33 (LLGTGAVLGGLVVAGVVAAVA). Residues 34-446 (AKRWVRRQQQ…SASVYSNFGV (413 aa)) lie on the Cytoplasmic side of the membrane. A disordered region spans residues 101 to 122 (RAGEDDEQGSGGHASAGEGSVS).

It belongs to the peroxin-3 family.

The protein resides in the peroxisome membrane. Its function is as follows. Involved in peroxisome biosynthesis. The protein is Peroxisomal biogenesis factor 3 (PEX3) of Eremothecium gossypii (strain ATCC 10895 / CBS 109.51 / FGSC 9923 / NRRL Y-1056) (Yeast).